The chain runs to 316 residues: Adenine deaminase (316 aa).

The Zn(2+) site is built by His-14, His-16, and His-194. The Proton donor role is filled by Glu-197. Position 275 (Asp-275) interacts with Zn(2+). Asp-276 is a substrate binding site.

This sequence belongs to the metallo-dependent hydrolases superfamily. Adenosine and AMP deaminases family. Adenine deaminase type 2 subfamily. It depends on Zn(2+) as a cofactor.

The catalysed reaction is adenine + H2O + H(+) = hypoxanthine + NH4(+). Catalyzes the hydrolytic deamination of adenine to hypoxanthine. Plays an important role in the purine salvage pathway and in nitrogen catabolism. This chain is Adenine deaminase, found in Stutzerimonas stutzeri (strain A1501) (Pseudomonas stutzeri).